The following is a 495-amino-acid chain: tRNA modification GTPase MnmE (495 aa).

Arginine 28, glutamate 89, and lysine 128 together coordinate (6S)-5-formyl-5,6,7,8-tetrahydrofolate. In terms of domain architecture, TrmE-type G spans 223–417 (GVRIVLGGCP…LRAQTLHLLH (195 aa)). K(+) is bound at residue asparagine 233. Residues 233–238 (NAGKSS), 252–258 (SSVPGTT), and 277–280 (DTAG) contribute to the GTP site. Mg(2+) is bound at residue serine 237. The K(+) site is built by serine 252, valine 254, and threonine 257. Threonine 258 contributes to the Mg(2+) binding site. Lysine 495 is a (6S)-5-formyl-5,6,7,8-tetrahydrofolate binding site.

Belongs to the TRAFAC class TrmE-Era-EngA-EngB-Septin-like GTPase superfamily. TrmE GTPase family. Homodimer. Heterotetramer of two MnmE and two MnmG subunits. K(+) is required as a cofactor.

Its subcellular location is the cytoplasm. Its function is as follows. Exhibits a very high intrinsic GTPase hydrolysis rate. Involved in the addition of a carboxymethylaminomethyl (cmnm) group at the wobble position (U34) of certain tRNAs, forming tRNA-cmnm(5)s(2)U34. This chain is tRNA modification GTPase MnmE, found in Treponema pallidum (strain Nichols).